Here is a 271-residue protein sequence, read N- to C-terminus: Protein PXR1 (271 aa).

Residues 25–72 form the G-patch domain; it reads TSRFGHQFLEKFGWKPGMGLGLYPMNSNTSHIKVSIKDDNVGLGAKLK. The segment at 147 to 239 is disordered; that stretch reads SNAKKRKREG…SASNIPDAVN (93 aa). The segment covering 157-168 has biased composition (acidic residues); it reads DDSEDEDDDDKE. Residues 175 to 203 are compositionally biased toward basic residues; it reads KKHKKHKKHKKDKKKDKKDKKEHKKHKKE. The span at 204–221 shows a compositional bias: basic and acidic residues; the sequence is EKRLKKEKRAEKTKETKK. Residue Ser230 is modified to Phosphoserine.

It belongs to the PINX1 family. Interacts with EST2.

The protein resides in the nucleus. It is found in the nucleolus. Functionally, involved in rRNA-processing at A0, A1 and A2 sites through its action in U18 and U24 snoRNA 3'-end final trimming. Negative regulator of telomerase throughX competition for binding to EST2 with TLC1. This Saccharomyces cerevisiae (strain YJM789) (Baker's yeast) protein is Protein PXR1 (PXR1).